The chain runs to 248 residues: B-box zinc finger protein 24 (248 aa).

8 residues coordinate Zn(2+): Cys-5, Cys-8, Cys-28, His-33, Cys-57, Cys-60, Cys-80, and His-85. Residues 5-47 form a B box-type 1; atypical zinc finger; that stretch reads CDVCEKAPATVICCADEAALCPQCDIEIHAANKLASKHQRLHL. The B box-type 2; atypical zinc-finger motif lies at 57-99; sequence CDICQEKAAFIFCVEDRALLCRDCDESIHVANSRSANHQRFLA. Positions 115 to 148 are disordered; that stretch reads IEKNQPEPSNNQQKANQIPAKSTSQQQQQPSSAT. Residues 120–130 show a composition bias toward polar residues; that stretch reads PEPSNNQQKAN. Residues 131-148 show a composition bias toward low complexity; the sequence is QIPAKSTSQQQQQPSSAT. The Nuclear localization signal motif lies at 226–229; that stretch reads KKPR. The interaction with COP1 stretch occupies residues 236-248; the sequence is DDDEEHFIVPDLG.

As to quaternary structure, interacts with COP1 WD40 domain. Interacts with HY5 and HYH. Interacts with RCD1 and TRP4. COP1-mediated ubiquitination and subsequent proteasomal degradation of BBX24/STO occurs in the dark. High expression in leaves and lower in roots and flowers.

The protein resides in the nucleus. Its function is as follows. Acts as a negative regulator of seedling photomorphogenesis and light-regulated inhibition of hypocotyl elongation. BBX24/STO and BBX25/STH function as transcriptional corepressors of HY5 activity, leading to the down-regulation of BBX22 expression. BBX24/STO acts additively with BBX25/STH during de-etiolation and the hypocotyl shade avoidance response. Functions as a negative regulator of photomorphogenic UV-B responses by interacting with both COP1 and HY5. May act as a transcription factor in the salt-stress response. The chain is B-box zinc finger protein 24 from Arabidopsis thaliana (Mouse-ear cress).